Reading from the N-terminus, the 725-residue chain is Catalase-peroxidase (725 aa).

The interval 1–20 is disordered; it reads MSSEAKCPFPHAANRSRSNQ. Residues 91–215 constitute a cross-link (tryptophyl-tyrosyl-methioninium (Trp-Tyr) (with M-241)); the sequence is WHATGTYRTM…LSATHMGLIY (125 aa). His-92 (proton acceptor) is an active-site residue. Residues 215–241 constitute a cross-link (tryptophyl-tyrosyl-methioninium (Tyr-Met) (with W-91)); it reads YVNPEGPDGSGDYMAAAKDIRATFYRM. His-256 lines the heme b pocket.

The protein belongs to the peroxidase family. Peroxidase/catalase subfamily. As to quaternary structure, homodimer or homotetramer. Requires heme b as cofactor. Formation of the three residue Trp-Tyr-Met cross-link is important for the catalase, but not the peroxidase activity of the enzyme.

It carries out the reaction H2O2 + AH2 = A + 2 H2O. The catalysed reaction is 2 H2O2 = O2 + 2 H2O. Functionally, bifunctional enzyme with both catalase and broad-spectrum peroxidase activity. The polypeptide is Catalase-peroxidase (Janthinobacterium sp. (strain Marseille) (Minibacterium massiliensis)).